The chain runs to 312 residues: Taste receptor type 2 member 103 (312 aa).

At 1–6 (MVLTIR) the chain is on the extracellular side. Residues 7 to 27 (AILWVTLITIISLEFIIGILG) traverse the membrane as a helical segment. Residues 28-61 (NVFIALVNIIDWVKRGKISAVDKTYMALAISRTA) lie on the Cytoplasmic side of the membrane. Residues 62–82 (FLLSLITGFLVSLLDPALLGM) traverse the membrane as a helical segment. Over 83–92 (RTMVRLLTIS) the chain is Extracellular. Residues 93–113 (WMVTNHFSVWFATCLSIFYFL) form a helical membrane-spanning segment. The Cytoplasmic segment spans residues 114–132 (KIANFSNSIFLVLKWEAKK). Residues 133–153 (VVSVTLVVSVIILIMNIIVIN) traverse the membrane as a helical segment. Topologically, residues 154 to 185 (KFTDRLQVNTLQNCSTSNTLKDYGLFLFISTG) are extracellular. Asn166 is a glycosylation site (N-linked (GlcNAc...) asparagine). Residues 186-206 (FTLTPFAVSLTMFLLLIFSLW) form a helical membrane-spanning segment. Residues 207 to 229 (RHLKNMCHSATGSRDVSTVAHIK) lie on the Cytoplasmic side of the membrane. A helical transmembrane segment spans residues 230-250 (GLQTVVTFLLLYTAFVMSLLS). Over 251-264 (ESLNINIQHTNLLS) the chain is Extracellular. Residues 265–285 (HFLRSIGVAFPTGHSCVLILG) form a helical membrane-spanning segment. Residues 286–312 (NSKLRQASLSVILWLRYKYKHIENWGP) lie on the Cytoplasmic side of the membrane.

Belongs to the G-protein coupled receptor T2R family. Expressed in subsets of taste receptor cells of the tongue and palate epithelium and exclusively in gustducin-positive cells. Expressed in 15% taste bud cells in circumvallate and foliate papillae but only in 2% in fungiform papillae.

It localises to the membrane. Functionally, gustducin-coupled receptor implicated in the perception of bitter compounds in the oral cavity and the gastrointestinal tract. Signals through PLCB2 and the calcium-regulated cation channel TRPM5. The chain is Taste receptor type 2 member 103 (Tas2r103) from Mus musculus (Mouse).